The chain runs to 480 residues: Ribulose bisphosphate carboxylase large chain (480 aa).

Residues 1 to 2 (MS) constitute a propeptide that is removed on maturation. Pro3 carries the N-acetylproline modification. Residue Lys14 is modified to N6,N6,N6-trimethyllysine. Substrate is bound by residues Asn123 and Thr173. The active-site Proton acceptor is Lys175. Lys177 provides a ligand contact to substrate. Mg(2+)-binding residues include Lys201, Asp203, and Glu204. The residue at position 201 (Lys201) is an N6-carboxylysine. Catalysis depends on His294, which acts as the Proton acceptor. Substrate-binding residues include Arg295, His327, and Ser379.

This sequence belongs to the RuBisCO large chain family. Type I subfamily. Heterohexadecamer of 8 large chains and 8 small chains; disulfide-linked. The disulfide link is formed within the large subunit homodimers. Mg(2+) is required as a cofactor. In terms of processing, the disulfide bond which can form in the large chain dimeric partners within the hexadecamer appears to be associated with oxidative stress and protein turnover.

The protein localises to the plastid. Its subcellular location is the chloroplast. It catalyses the reaction 2 (2R)-3-phosphoglycerate + 2 H(+) = D-ribulose 1,5-bisphosphate + CO2 + H2O. The enzyme catalyses D-ribulose 1,5-bisphosphate + O2 = 2-phosphoglycolate + (2R)-3-phosphoglycerate + 2 H(+). In terms of biological role, ruBisCO catalyzes two reactions: the carboxylation of D-ribulose 1,5-bisphosphate, the primary event in carbon dioxide fixation, as well as the oxidative fragmentation of the pentose substrate in the photorespiration process. Both reactions occur simultaneously and in competition at the same active site. The polypeptide is Ribulose bisphosphate carboxylase large chain (Mollugo verticillata (Green carpetweed)).